A 490-amino-acid polypeptide reads, in one-letter code: UDP-N-acetylmuramoyl-L-alanyl-D-glutamate--2,6-diaminopimelate ligase (490 aa).

S31 is a UDP-N-acetyl-alpha-D-muramoyl-L-alanyl-D-glutamate binding site. An ATP-binding site is contributed by 109–115; that stretch reads GTNGKTS. UDP-N-acetyl-alpha-D-muramoyl-L-alanyl-D-glutamate-binding positions include N150, 151–152, S178, and R186; that span reads TT. Residue K218 is modified to N6-carboxylysine. Meso-2,6-diaminopimelate-binding positions include R384, 408 to 411, G458, and E462; that span reads DNPR. Residues 408 to 411 carry the Meso-diaminopimelate recognition motif motif; the sequence is DNPR.

Belongs to the MurCDEF family. MurE subfamily. Mg(2+) serves as cofactor. Post-translationally, carboxylation is probably crucial for Mg(2+) binding and, consequently, for the gamma-phosphate positioning of ATP.

The protein resides in the cytoplasm. The catalysed reaction is UDP-N-acetyl-alpha-D-muramoyl-L-alanyl-D-glutamate + meso-2,6-diaminopimelate + ATP = UDP-N-acetyl-alpha-D-muramoyl-L-alanyl-gamma-D-glutamyl-meso-2,6-diaminopimelate + ADP + phosphate + H(+). It participates in cell wall biogenesis; peptidoglycan biosynthesis. Functionally, catalyzes the addition of meso-diaminopimelic acid to the nucleotide precursor UDP-N-acetylmuramoyl-L-alanyl-D-glutamate (UMAG) in the biosynthesis of bacterial cell-wall peptidoglycan. This is UDP-N-acetylmuramoyl-L-alanyl-D-glutamate--2,6-diaminopimelate ligase from Bacillus velezensis (strain DSM 23117 / BGSC 10A6 / LMG 26770 / FZB42) (Bacillus amyloliquefaciens subsp. plantarum).